The chain runs to 80 residues: Conotoxin Cl9.5 (80 aa).

The N-terminal stretch at Met1–Ala23 is a signal peptide. The propeptide occupies Gly24 to Asp37. Cystine bridges form between Cys42–Cys59, Cys47–Cys69, and Cys49–Cys74.

In terms of tissue distribution, expressed by the venom duct.

It localises to the secreted. In Californiconus californicus (California cone), this protein is Conotoxin Cl9.5.